A 257-amino-acid polypeptide reads, in one-letter code: Glutamate racemase (257 aa).

Substrate contacts are provided by residues 12 to 13 (DS) and 44 to 45 (YG). C75 (proton donor/acceptor) is an active-site residue. Residue 76-77 (NT) participates in substrate binding. The Proton donor/acceptor role is filled by C185. Residue 186–187 (TH) participates in substrate binding.

Belongs to the aspartate/glutamate racemases family.

It carries out the reaction L-glutamate = D-glutamate. Its pathway is cell wall biogenesis; peptidoglycan biosynthesis. In terms of biological role, provides the (R)-glutamate required for cell wall biosynthesis. This chain is Glutamate racemase, found in Clostridium botulinum (strain Langeland / NCTC 10281 / Type F).